Consider the following 552-residue polypeptide: Chaperonin GroEL 3 (552 aa).

ATP is bound by residues 30-33 (TLGP), Lys-51, 87-91 (DGTTT), Gly-415, and Asp-495.

Belongs to the chaperonin (HSP60) family. As to quaternary structure, forms a cylinder of 14 subunits composed of two heptameric rings stacked back-to-back. Interacts with the co-chaperonin GroES.

Its subcellular location is the cytoplasm. It catalyses the reaction ATP + H2O + a folded polypeptide = ADP + phosphate + an unfolded polypeptide.. Its function is as follows. Together with its co-chaperonin GroES, plays an essential role in assisting protein folding. The GroEL-GroES system forms a nano-cage that allows encapsulation of the non-native substrate proteins and provides a physical environment optimized to promote and accelerate protein folding. This Mesorhizobium japonicum (strain LMG 29417 / CECT 9101 / MAFF 303099) (Mesorhizobium loti (strain MAFF 303099)) protein is Chaperonin GroEL 3.